The chain runs to 509 residues: Steroid 17-alpha-hydroxylase/17,20 lyase (509 aa).

Asparagine 202 contacts substrate. Cysteine 442 provides a ligand contact to heme.

The protein belongs to the cytochrome P450 family. Heme serves as cofactor.

It is found in the endoplasmic reticulum membrane. It localises to the microsome membrane. The enzyme catalyses a C21-steroid + reduced [NADPH--hemoprotein reductase] + O2 = a 17alpha-hydroxy-C21-steroid + oxidized [NADPH--hemoprotein reductase] + H2O + H(+). It carries out the reaction progesterone + reduced [NADPH--hemoprotein reductase] + O2 = 17alpha-hydroxyprogesterone + oxidized [NADPH--hemoprotein reductase] + H2O + H(+). It catalyses the reaction pregnenolone + reduced [NADPH--hemoprotein reductase] + O2 = 17alpha-hydroxypregnenolone + oxidized [NADPH--hemoprotein reductase] + H2O + H(+). The catalysed reaction is 17alpha-hydroxyprogesterone + reduced [NADPH--hemoprotein reductase] + O2 = androst-4-ene-3,17-dione + acetate + oxidized [NADPH--hemoprotein reductase] + H2O + 2 H(+). The enzyme catalyses 17alpha-hydroxyprogesterone + reduced [NADPH--hemoprotein reductase] + O2 = 16alpha,17alpha-dihydroxyprogesterone + oxidized [NADPH--hemoprotein reductase] + H2O + H(+). It carries out the reaction 16alpha,17alpha-dihydroxyprogesterone + reduced [NADPH--hemoprotein reductase] + O2 = 6beta,16alpha,17alpha-trihydroxyprogesterone + oxidized [NADPH--hemoprotein reductase] + H2O + H(+). It catalyses the reaction 17alpha-hydroxypregnenolone + reduced [NADPH--hemoprotein reductase] + O2 = 3beta-hydroxyandrost-5-en-17-one + acetate + oxidized [NADPH--hemoprotein reductase] + H2O + 2 H(+). The catalysed reaction is 16alpha,17alpha-dihydroxypregnenolone + reduced [NADPH--hemoprotein reductase] + O2 = 3beta,16alpha-dihydroxy-androst-5-en-17-one + acetate + oxidized [NADPH--hemoprotein reductase] + H2O + 2 H(+). The enzyme catalyses 3beta-hydroxyandrost-5-en-17-one + reduced [NADPH--hemoprotein reductase] + O2 = 3beta,16alpha-dihydroxy-androst-5-en-17-one + oxidized [NADPH--hemoprotein reductase] + H2O + H(+). It carries out the reaction androst-4-ene-3,17-dione + reduced [NADPH--hemoprotein reductase] + O2 = 16alpha-hydroxyandrost-4-ene-3,17-dione + oxidized [NADPH--hemoprotein reductase] + H2O + H(+). It participates in steroid hormone biosynthesis. The protein operates within steroid biosynthesis; glucocorticoid biosynthesis. With respect to regulation, regulated predominantly by intracellular cAMP levels. The 17,20-lyase activity is stimulated by cytochrome b5, which acts as an allosteric effector increasing the Vmax of the lyase activity. Functionally, a cytochrome P450 monooxygenase involved in corticoid and androgen biosynthesis. Catalyzes 17-alpha hydroxylation of C21 steroids, which is common for both pathways. A second oxidative step, required only for androgen synthesis, involves an acyl-carbon cleavage. The 17-alpha hydroxy intermediates, as part of adrenal glucocorticoids biosynthesis pathway, are precursors of cortisol. Hydroxylates steroid hormones, pregnenolone and progesterone to form 17-alpha hydroxy metabolites, followed by the cleavage of the C17-C20 bond to form C19 steroids, dehydroepiandrosterone (DHEA) and androstenedione. Has 16-alpha hydroxylase activity. Catalyzes 16-alpha hydroxylation of 17-alpha hydroxy pregnenolone, followed by the cleavage of the C17-C20 bond to form 16-alpha-hydroxy DHEA. Also 16-alpha hydroxylates androgens, relevant for estriol synthesis. Mechanistically, uses molecular oxygen inserting one oxygen atom into a substrate, and reducing the second into a water molecule, with two electrons provided by NADPH via cytochrome P450 reductase (CPR; NADPH-ferrihemoprotein reductase). This Capra hircus (Goat) protein is Steroid 17-alpha-hydroxylase/17,20 lyase (CYP17A1).